We begin with the raw amino-acid sequence, 128 residues long: Small ribosomal subunit protein eS8 (128 aa).

This sequence belongs to the eukaryotic ribosomal protein eS8 family. In terms of assembly, part of the 30S ribosomal subunit.

In Methanococcus maripaludis (strain C6 / ATCC BAA-1332), this protein is Small ribosomal subunit protein eS8.